A 202-amino-acid chain; its full sequence is Small ribosomal subunit protein uS2 (202 aa).

It belongs to the universal ribosomal protein uS2 family.

In Pyrococcus abyssi (strain GE5 / Orsay), this protein is Small ribosomal subunit protein uS2 (rps2).